A 901-amino-acid chain; its full sequence is Protein translocase subunit SecA (901 aa).

Residues Gln87, 105–109 (GEGKT), and Asp512 each bind ATP. A disordered region spans residues 852–901 (AQMQQLSHQSDDEAAAEDLAAQTGERKVGRNDPCPCGSGKKYKQCHGRLS). Zn(2+) is bound by residues Cys885, Cys887, Cys896, and His897. The segment covering 891-901 (KKYKQCHGRLS) has biased composition (basic residues).

The protein belongs to the SecA family. As to quaternary structure, monomer and homodimer. Part of the essential Sec protein translocation apparatus which comprises SecA, SecYEG and auxiliary proteins SecDF-YajC and YidC. It depends on Zn(2+) as a cofactor.

It is found in the cell inner membrane. Its subcellular location is the cytoplasm. The catalysed reaction is ATP + H2O + cellular proteinSide 1 = ADP + phosphate + cellular proteinSide 2.. In terms of biological role, part of the Sec protein translocase complex. Interacts with the SecYEG preprotein conducting channel. Has a central role in coupling the hydrolysis of ATP to the transfer of proteins into and across the cell membrane, serving both as a receptor for the preprotein-SecB complex and as an ATP-driven molecular motor driving the stepwise translocation of polypeptide chains across the membrane. This chain is Protein translocase subunit SecA, found in Klebsiella pneumoniae (strain 342).